Reading from the N-terminus, the 306-residue chain is MKPTKELLAGILDEVRPLIGQGKVADYIPALAGISATKLGIAVCYNDGEIIQAGDTQERFSIQSISKVMSLTLAMSLYEPEEIWRRVGKEPSGHAFNSMIQLELENGIPRNPFINAGALVVSDLLHSRLAAPQYRMLELVRKLSCNPHLTYDKAVAASEMQHSDRNASIAYLMRSFGNFENEVMPVLTNYFSYCSLNMSCIDLARTFSYLANKGLPLGAKKTIISQTQSKQMNALLATCGLYDGAGEFAYRVGMPGKSGVGGGIVAIVPGEMSITVWSPELDPSGNSLAGTAALELLAERIGRSIF.

Substrate is bound by residues Ser64, Asn115, Glu159, Asn166, Tyr190, Tyr242, and Val260.

This sequence belongs to the glutaminase family. In terms of assembly, homotetramer.

The enzyme catalyses L-glutamine + H2O = L-glutamate + NH4(+). This Photobacterium profundum (strain SS9) protein is Glutaminase.